A 252-amino-acid polypeptide reads, in one-letter code: MRRPFIAGNWKLHKTSAEAAALVGELKGALSDVVDRDIVVAPVFTSLAAVIATLEKSDISVAAQNCYPENQGAFTGEVSPALLKDAGCRYVIVGHSERRQLFAESDAFINRKVKAVIDAGLSAILCIGETLEEREADKTFDVLERQVRCGLEGLDAAAMEQIVVAYEPVWAIGTGKTATDSQAQQAHSFIRSLVNDIFGSKVAQQVRIVYGGSVKPGNVDGLLQQPDIDGALVGGASLNAEDFIRIVKFKAV.

Substrate is bound at residue 9-11 (NWK). H95 acts as the Electrophile in catalysis. The Proton acceptor role is filled by E167. Substrate-binding positions include G173, S213, and 234–235 (GG).

This sequence belongs to the triosephosphate isomerase family. In terms of assembly, homodimer.

It localises to the cytoplasm. The enzyme catalyses D-glyceraldehyde 3-phosphate = dihydroxyacetone phosphate. Its pathway is carbohydrate biosynthesis; gluconeogenesis. The protein operates within carbohydrate degradation; glycolysis; D-glyceraldehyde 3-phosphate from glycerone phosphate: step 1/1. Its function is as follows. Involved in the gluconeogenesis. Catalyzes stereospecifically the conversion of dihydroxyacetone phosphate (DHAP) to D-glyceraldehyde-3-phosphate (G3P). In Syntrophotalea carbinolica (strain DSM 2380 / NBRC 103641 / GraBd1) (Pelobacter carbinolicus), this protein is Triosephosphate isomerase.